Consider the following 312-residue polypeptide: MSISNITVYMPSVLTLVGIPGLESVQCWIGIPFCAIYLIAMIGNSLLLSIIKSERSLHEPLYIFLGMLGATDIALASSIMPKMLGIFWFNVPEIYFDSCLLQMWFIHTLQGIESGILVAMALDRYVAICYPLRHANIFTHQLVIQIGTMVVLRAAILVAPCLVLIKCRFQFYHTTVISHSYCEHMAIVKLAAANVQVNKIYGLFVAFTVAGFDLTFITLSYIQIFITVFRLPQKEARFKAFNTCIAHICVFLQFYLLAFFSFFTHRFGSHISPYIHILFSSIYLLVPPFLNPLVYGAKTTQIRIHVVKMFCS.

Residues 1-27 are Extracellular-facing; sequence MSISNITVYMPSVLTLVGIPGLESVQC. Asn5 carries N-linked (GlcNAc...) asparagine glycosylation. Residues 28 to 48 traverse the membrane as a helical segment; it reads WIGIPFCAIYLIAMIGNSLLL. The Cytoplasmic portion of the chain corresponds to 49-56; that stretch reads SIIKSERS. Residues 57–77 form a helical membrane-spanning segment; the sequence is LHEPLYIFLGMLGATDIALAS. Residues 78–101 are Extracellular-facing; it reads SIMPKMLGIFWFNVPEIYFDSCLL. An intrachain disulfide couples Cys99 to Cys182. The chain crosses the membrane as a helical span at residues 102-122; the sequence is QMWFIHTLQGIESGILVAMAL. Topologically, residues 123–141 are cytoplasmic; it reads DRYVAICYPLRHANIFTHQ. The helical transmembrane segment at 142-162 threads the bilayer; it reads LVIQIGTMVVLRAAILVAPCL. The Extracellular segment spans residues 163–199; it reads VLIKCRFQFYHTTVISHSYCEHMAIVKLAAANVQVNK. The chain crosses the membrane as a helical span at residues 200-220; that stretch reads IYGLFVAFTVAGFDLTFITLS. Residues 221-240 lie on the Cytoplasmic side of the membrane; the sequence is YIQIFITVFRLPQKEARFKA. Residues 241-261 form a helical membrane-spanning segment; that stretch reads FNTCIAHICVFLQFYLLAFFS. Residues 262–276 lie on the Extracellular side of the membrane; that stretch reads FFTHRFGSHISPYIH. The helical transmembrane segment at 277–297 threads the bilayer; it reads ILFSSIYLLVPPFLNPLVYGA. Residues 298–312 are Cytoplasmic-facing; that stretch reads KTTQIRIHVVKMFCS.

Belongs to the G-protein coupled receptor 1 family.

It is found in the cell membrane. Functionally, odorant receptor. The sequence is that of Olfactory receptor 52A1 (OR52A1) from Homo sapiens (Human).